Reading from the N-terminus, the 290-residue chain is MNELIIATRKSKLAQVQTEIIMGKLKSKFNIDSKKLLIVTEGDRKLDVSLNKIGGKGLFVKDIELALLNKEAHAAVHSMKDVPFEVSSEFEITAITGREDIRDVFISNGDISFKDIKKGAKVGTSSIRRAAQLKLLRSDLEIVPIRGNVQTRLKKMEEQNLDGIVLAAAGLKRLGDENLITDYFDPKEFLPAVSQGALGIECLKDGDANKYFEALIDAEATLTVEAERSFMKELQGDCHSLIGAYSEIQGDDLYMIGIYDIGGKIVKKDILGCKTNNIELGKKLAQKILG.

Cysteine 238 is modified (S-(dipyrrolylmethanemethyl)cysteine).

This sequence belongs to the HMBS family. In terms of assembly, monomer. Dipyrromethane is required as a cofactor.

The enzyme catalyses 4 porphobilinogen + H2O = hydroxymethylbilane + 4 NH4(+). Its pathway is porphyrin-containing compound metabolism; protoporphyrin-IX biosynthesis; coproporphyrinogen-III from 5-aminolevulinate: step 2/4. In terms of biological role, tetrapolymerization of the monopyrrole PBG into the hydroxymethylbilane pre-uroporphyrinogen in several discrete steps. This is Porphobilinogen deaminase from Clostridium botulinum (strain Eklund 17B / Type B).